Here is a 510-residue protein sequence, read N- to C-terminus: Maturase K (510 aa).

Belongs to the intron maturase 2 family. MatK subfamily.

It is found in the plastid. Its subcellular location is the chloroplast. In terms of biological role, usually encoded in the trnK tRNA gene intron. Probably assists in splicing its own and other chloroplast group II introns. This Populus trichocarpa (Western balsam poplar) protein is Maturase K.